The primary structure comprises 285 residues: Shikimate dehydrogenase (NADP(+)) (285 aa).

Shikimate contacts are provided by residues 20 to 22 (SLS) and Thr-67. Lys-71 acts as the Proton acceptor in catalysis. Glu-83 serves as a coordination point for NADP(+). 2 residues coordinate shikimate: Asn-92 and Asp-107. NADP(+)-binding positions include 132–136 (GAGGA) and Leu-230. A shikimate-binding site is contributed by Tyr-232. Gly-253 provides a ligand contact to NADP(+).

It belongs to the shikimate dehydrogenase family. In terms of assembly, homodimer.

It carries out the reaction shikimate + NADP(+) = 3-dehydroshikimate + NADPH + H(+). The protein operates within metabolic intermediate biosynthesis; chorismate biosynthesis; chorismate from D-erythrose 4-phosphate and phosphoenolpyruvate: step 4/7. Involved in the biosynthesis of the chorismate, which leads to the biosynthesis of aromatic amino acids. Catalyzes the reversible NADPH linked reduction of 3-dehydroshikimate (DHSA) to yield shikimate (SA). The chain is Shikimate dehydrogenase (NADP(+)) from Salinibacter ruber (strain DSM 13855 / M31).